Reading from the N-terminus, the 269-residue chain is uncharacterized protein (269 aa).

A coiled-coil region spans residues 52–262; that stretch reads KNVYEQLVAT…RKILVESINK (211 aa).

This is an uncharacterized protein from Caenorhabditis elegans.